The primary structure comprises 203 residues: MTGKTKVLVLYHSSYGHIETLAKAVAEGAASQAGTEVLLKRVPETMPADAMANAGMKVEQEAPVATPQELGDYDAVIFGTPTRFGNMTGQMRTFLDQTGGLWAKGALVGKVGSVFTSTGTGGGNETTITSFHTNLFHHGMVVVGLPYSVGTELFDISEVRGGSPYGASTLAGGDGKRQPTEKELSLARKQGAHVASIAAKLKA.

The region spanning 7–194 (VLVLYHSSYG…SLARKQGAHV (188 aa)) is the Flavodoxin-like domain. Residues 13 to 18 (SSYGHI) and 82 to 84 (TRF) contribute to the FMN site. Tyr-15 is a binding site for NAD(+). Residue Trp-102 participates in substrate binding. FMN is bound by residues 117 to 122 (STGTGG) and His-137.

This sequence belongs to the WrbA family. It depends on FMN as a cofactor.

It catalyses the reaction a quinone + NADH + H(+) = a quinol + NAD(+). It carries out the reaction a quinone + NADPH + H(+) = a quinol + NADP(+). The chain is NAD(P)H dehydrogenase (quinone) from Parvibaculum lavamentivorans (strain DS-1 / DSM 13023 / NCIMB 13966).